The sequence spans 59 residues: Large ribosomal subunit protein bL35 (59 aa).

Residues 17–43 are compositionally biased toward basic residues; it reads GQIKRKHAYTSHLAPHKSTKQKRHLRK. Positions 17 to 47 are disordered; it reads GQIKRKHAYTSHLAPHKSTKQKRHLRKQATV.

The protein belongs to the bacterial ribosomal protein bL35 family.

The chain is Large ribosomal subunit protein bL35 from Mycoplasma genitalium (strain ATCC 33530 / DSM 19775 / NCTC 10195 / G37) (Mycoplasmoides genitalium).